A 190-amino-acid polypeptide reads, in one-letter code: GTP cyclohydrolase 1 (190 aa).

3 residues coordinate Zn(2+): Cys80, His83, and Cys151.

It belongs to the GTP cyclohydrolase I family. As to quaternary structure, toroid-shaped homodecamer, composed of two pentamers of five dimers.

It catalyses the reaction GTP + H2O = 7,8-dihydroneopterin 3'-triphosphate + formate + H(+). It participates in cofactor biosynthesis; 7,8-dihydroneopterin triphosphate biosynthesis; 7,8-dihydroneopterin triphosphate from GTP: step 1/1. The protein is GTP cyclohydrolase 1 (folE) of Rickettsia prowazekii (strain Madrid E).